The primary structure comprises 257 residues: UPF0246 protein Rsph17029_0026 (257 aa).

Belongs to the UPF0246 family.

The sequence is that of UPF0246 protein Rsph17029_0026 from Cereibacter sphaeroides (strain ATCC 17029 / ATH 2.4.9) (Rhodobacter sphaeroides).